The primary structure comprises 78 residues: Small ribosomal subunit protein eS17 (78 aa).

This sequence belongs to the eukaryotic ribosomal protein eS17 family.

This chain is Small ribosomal subunit protein eS17, found in Sulfurisphaera tokodaii (strain DSM 16993 / JCM 10545 / NBRC 100140 / 7) (Sulfolobus tokodaii).